The following is a 55-amino-acid chain: Caltrin-like protein 2 (55 aa).

The 49-residue stretch at 7–55 (AINRPGSCPRVMIYCPARHPPNKCTSDYDCPKPQKCCPGYCGKQCYQPE) folds into the WAP domain.

Glycosylated.

Its function is as follows. Inhibits calcium transport into spermatozoa. The polypeptide is Caltrin-like protein 2 (Cavia porcellus (Guinea pig)).